Reading from the N-terminus, the 484-residue chain is Glycogen synthase (484 aa).

Lys-20 is an ADP-alpha-D-glucose binding site.

The protein belongs to the glycosyltransferase 1 family. Bacterial/plant glycogen synthase subfamily.

It carries out the reaction [(1-&gt;4)-alpha-D-glucosyl](n) + ADP-alpha-D-glucose = [(1-&gt;4)-alpha-D-glucosyl](n+1) + ADP + H(+). The protein operates within glycan biosynthesis; glycogen biosynthesis. Functionally, synthesizes alpha-1,4-glucan chains using ADP-glucose. This is Glycogen synthase from Vibrio atlanticus (strain LGP32) (Vibrio splendidus (strain Mel32)).